The primary structure comprises 332 residues: MAELFYDADADLSIIQGRKVAVIGYGSQGHAHALSLRDSGVDVRVGLHEGSKSKAKAEEQGLRVVPVAEAAAEADVIMILVPDPIQAEVYEKDIKDNLKDGDALFFGHGLNIRYGFVKPPAGVDVCMVAPKGPGHLVRRQYEEGRGVPCLVAVEQDATGNAFALALSYAKGIGGTRAGVIRTTFTEETETDLFGEQAVLAGGVTALVKAGFETLTEAGYQPEIAYFECLHELKLIVDLMYEGGLEKMRWSISETAEWGDYVTGPRIITDVTKAEMRKVLAEIQDGTFAKNWMDEYHGGLKKYNEYKKQDSEHLLETTGKELRKLMSWVDEEA.

Residues 2–182 (AELFYDADAD…GGTRAGVIRT (181 aa)) form the KARI N-terminal Rossmann domain. Residues 25–28 (YGSQ), S51, S53, and 83–86 (DPIQ) each bind NADP(+). H108 is a catalytic residue. G134 lines the NADP(+) pocket. Residues 183 to 328 (TFTEETETDL…KELRKLMSWV (146 aa)) form the KARI C-terminal knotted domain. D191, E195, E227, and E231 together coordinate Mg(2+). S252 contacts substrate.

This sequence belongs to the ketol-acid reductoisomerase family. The cofactor is Mg(2+).

The catalysed reaction is (2R)-2,3-dihydroxy-3-methylbutanoate + NADP(+) = (2S)-2-acetolactate + NADPH + H(+). The enzyme catalyses (2R,3R)-2,3-dihydroxy-3-methylpentanoate + NADP(+) = (S)-2-ethyl-2-hydroxy-3-oxobutanoate + NADPH + H(+). It participates in amino-acid biosynthesis; L-isoleucine biosynthesis; L-isoleucine from 2-oxobutanoate: step 2/4. It functions in the pathway amino-acid biosynthesis; L-valine biosynthesis; L-valine from pyruvate: step 2/4. In terms of biological role, involved in the biosynthesis of branched-chain amino acids (BCAA). Catalyzes an alkyl-migration followed by a ketol-acid reduction of (S)-2-acetolactate (S2AL) to yield (R)-2,3-dihydroxy-isovalerate. In the isomerase reaction, S2AL is rearranged via a Mg-dependent methyl migration to produce 3-hydroxy-3-methyl-2-ketobutyrate (HMKB). In the reductase reaction, this 2-ketoacid undergoes a metal-dependent reduction by NADPH to yield (R)-2,3-dihydroxy-isovalerate. In Streptomyces coelicolor (strain ATCC BAA-471 / A3(2) / M145), this protein is Ketol-acid reductoisomerase (NADP(+)) 2.